The primary structure comprises 436 residues: Adenylosuccinate synthetase (436 aa).

GTP-binding positions include 22–28 (GDEGKGK) and 50–52 (GHE). The Proton acceptor role is filled by Asp23. Residues Asp23 and Gly50 each contribute to the Mg(2+) site. Residues 23-26 (DEGK), 48-51 (NAGH), Thr141, Arg155, Asn231, Thr246, and Arg310 contribute to the IMP site. Catalysis depends on His51, which acts as the Proton donor. 306–312 (VSTARVR) provides a ligand contact to substrate. GTP contacts are provided by residues Arg312, 338–340 (KMD), and 424–426 (GVG).

It belongs to the adenylosuccinate synthetase family. As to quaternary structure, homodimer. Requires Mg(2+) as cofactor.

Its subcellular location is the cytoplasm. The catalysed reaction is IMP + L-aspartate + GTP = N(6)-(1,2-dicarboxyethyl)-AMP + GDP + phosphate + 2 H(+). Its pathway is purine metabolism; AMP biosynthesis via de novo pathway; AMP from IMP: step 1/2. Its function is as follows. Plays an important role in the salvage pathway for purine nucleotide biosynthesis. Catalyzes the first committed step in the biosynthesis of AMP from IMP. The protein is Adenylosuccinate synthetase of Babesia bovis.